Here is a 224-residue protein sequence, read N- to C-terminus: Ribonuclease HII (224 aa).

An RNase H type-2 domain is found at 36–224 (RGVAGVDEVG…RRSFLRRFLG (189 aa)). Positions 42, 43, and 138 each coordinate a divalent metal cation.

It belongs to the RNase HII family. Mn(2+) is required as a cofactor. It depends on Mg(2+) as a cofactor.

Its subcellular location is the cytoplasm. The catalysed reaction is Endonucleolytic cleavage to 5'-phosphomonoester.. Its function is as follows. Endonuclease that specifically degrades the RNA of RNA-DNA hybrids. The polypeptide is Ribonuclease HII (Parasynechococcus marenigrum (strain WH8102)).